The sequence spans 135 residues: Large ribosomal subunit protein uL16c (135 aa).

Belongs to the universal ribosomal protein uL16 family. As to quaternary structure, part of the 50S ribosomal subunit.

The protein localises to the plastid. The protein resides in the chloroplast. In Cucumis sativus (Cucumber), this protein is Large ribosomal subunit protein uL16c.